The following is a 204-amino-acid chain: Large ribosomal subunit protein uL4 (204 aa).

The span at 42-55 shows a compositional bias: polar residues; the sequence is GSRQGSKAQKNRSA. The disordered stretch occupies residues 42 to 85; sequence GSRQGSKAQKNRSAVSGGGKRPWAQKGTGRARAGTTRGPIWRSG. The span at 68 to 79 shows a compositional bias: low complexity; the sequence is GTGRARAGTTRG.

Belongs to the universal ribosomal protein uL4 family. In terms of assembly, part of the 50S ribosomal subunit.

Functionally, one of the primary rRNA binding proteins, this protein initially binds near the 5'-end of the 23S rRNA. It is important during the early stages of 50S assembly. It makes multiple contacts with different domains of the 23S rRNA in the assembled 50S subunit and ribosome. Forms part of the polypeptide exit tunnel. This is Large ribosomal subunit protein uL4 from Vesicomyosocius okutanii subsp. Calyptogena okutanii (strain HA).